The following is a 234-amino-acid chain: Large ribosomal subunit protein uL1 (234 aa).

This sequence belongs to the universal ribosomal protein uL1 family. Part of the 50S ribosomal subunit.

In terms of biological role, binds directly to 23S rRNA. The L1 stalk is quite mobile in the ribosome, and is involved in E site tRNA release. Its function is as follows. Protein L1 is also a translational repressor protein, it controls the translation of the L11 operon by binding to its mRNA. The chain is Large ribosomal subunit protein uL1 from Cronobacter sakazakii (strain ATCC BAA-894) (Enterobacter sakazakii).